Reading from the N-terminus, the 1177-residue chain is DNA-directed RNA polymerase subunit beta (1177 aa).

Acidic residues predominate over residues 1147–1161; it reads DDTEIEMRDTEDDDD. Residues 1147 to 1177 form a disordered region; it reads DDTEIEMRDTEDDDDHQSADKLNVEVETTKE. Basic and acidic residues predominate over residues 1162–1177; sequence HQSADKLNVEVETTKE.

It belongs to the RNA polymerase beta chain family. As to quaternary structure, the RNAP catalytic core consists of 2 alpha, 1 beta, 1 beta' and 1 omega subunit. When a sigma factor is associated with the core the holoenzyme is formed, which can initiate transcription.

It catalyses the reaction RNA(n) + a ribonucleoside 5'-triphosphate = RNA(n+1) + diphosphate. Its function is as follows. DNA-dependent RNA polymerase catalyzes the transcription of DNA into RNA using the four ribonucleoside triphosphates as substrates. In Bacillus cereus (strain G9842), this protein is DNA-directed RNA polymerase subunit beta.